The following is a 210-amino-acid chain: Glutathione S-transferase 2 (210 aa).

The 80-residue stretch at 1–80 folds into the GST N-terminal domain; that stretch reads MDFYYLPLSA…YLVEKYGKQN (80 aa). Glutathione is bound by residues Ser-9, 50–52, and 64–66; these read HTI and ESR. The region spanning 87-208 is the GST C-terminal domain; sequence CPKKRALINQ…AGCLEMKKYF (122 aa).

The protein belongs to the GST superfamily. Theta family. Homodimer.

The enzyme catalyses RX + glutathione = an S-substituted glutathione + a halide anion + H(+). Its function is as follows. Conjugation of reduced glutathione to a wide number of exogenous and endogenous hydrophobic electrophiles. The chain is Glutathione S-transferase 2 (Gst2) from Musca domestica (House fly).